Here is a 150-residue protein sequence, read N- to C-terminus: D-aminoacyl-tRNA deacylase (150 aa).

The Gly-cisPro motif, important for rejection of L-amino acids motif lies at 138–139 (GP).

This sequence belongs to the DTD family. As to quaternary structure, homodimer.

It localises to the cytoplasm. It carries out the reaction glycyl-tRNA(Ala) + H2O = tRNA(Ala) + glycine + H(+). The enzyme catalyses a D-aminoacyl-tRNA + H2O = a tRNA + a D-alpha-amino acid + H(+). Functionally, an aminoacyl-tRNA editing enzyme that deacylates mischarged D-aminoacyl-tRNAs. Also deacylates mischarged glycyl-tRNA(Ala), protecting cells against glycine mischarging by AlaRS. Acts via tRNA-based rather than protein-based catalysis; rejects L-amino acids rather than detecting D-amino acids in the active site. By recycling D-aminoacyl-tRNA to D-amino acids and free tRNA molecules, this enzyme counteracts the toxicity associated with the formation of D-aminoacyl-tRNA entities in vivo and helps enforce protein L-homochirality. This Chlorobium limicola (strain DSM 245 / NBRC 103803 / 6330) protein is D-aminoacyl-tRNA deacylase.